The sequence spans 249 residues: uncharacterized protein (249 aa).

The protein belongs to the ycf73 family.

Its subcellular location is the plastid. The protein localises to the chloroplast. This is an uncharacterized protein from Oryza sativa (Rice).